A 536-amino-acid chain; its full sequence is SNW domain-containing protein 1 (536 aa).

The tract at residues 1–46 (MALTSFLPAPTQLSQDQLEAEEKARSQRSRQTSLVSSRREPPPYGY) is disordered. The residue at position 2 (A2) is an N-acetylalanine. S14 bears the Phosphoserine mark. K23 is covalently cross-linked (Glycyl lysine isopeptide (Lys-Gly) (interchain with G-Cter in SUMO2)). Positions 59-79 (GDGGAFPEIHVAQYPLDMGRK) are interaction with PPIL1. Glycyl lysine isopeptide (Lys-Gly) (interchain with G-Cter in SUMO2) cross-links involve residues K81, K97, K115, K122, K141, K158, and K170. The interval 174–339 (AQYIRYTPSQ…KARERRAGIK (166 aa)) is SNW. A phosphoserine mark is found at S182 and S190. K193 participates in a covalent cross-link: Glycyl lysine isopeptide (Lys-Gly) (interchain with G-Cter in SUMO2). The segment at 209 to 233 (PPRFKINKKIPRGPPSPPAPVMHSP) is disordered. Phosphoserine occurs at positions 224, 232, and 234. Glycyl lysine isopeptide (Lys-Gly) (interchain with G-Cter in SUMO2) cross-links involve residues K240, K258, K286, K339, K344, K416, and K441. Positions 311–386 (KMAQKEKEKH…RSKLQRNENR (76 aa)) are disordered. S446 carries the post-translational modification Phosphoserine. Residue K452 forms a Glycyl lysine isopeptide (Lys-Gly) (interchain with G-Cter in SUMO2) linkage. Basic and acidic residues-rich tracts occupy residues 470–489 (NRFV…RGRE) and 503–530 (KFLE…EHEG). Residues 470 to 536 (NRFVPDKEFS…EHEGKKRRKE (67 aa)) are disordered. Phosphoserine is present on residues S479 and S481. Residue K509 forms a Glycyl lysine isopeptide (Lys-Gly) (interchain with G-Cter in SUMO2) linkage.

This sequence belongs to the SNW family. In terms of assembly, identified in the spliceosome C complex. Associates with U4/U6-U5 tri-small nuclear ribonucleoproteins (U4/U6-U5 tri-snRNPs). Component of the minor spliceosome, which splices U12-type introns. Interacts with SKI, SMAD2,SMAD3, RBPJ, RB1, PABPN1, MAGEA1, SIRT1, FOXN3, U2AF2, DAXX and ATP1B4. Interacts with PPIL1. Interacts with VDR and RXRA; preferentially associates with VDR:RXRA heterodimers. Interacts with NCOR2. Interacts with MAML1. Interacts with NOTCH1 NICD; the interaction involves multimerized NOTCH1 NICD. Forms a complex with NOTCH1 NICD and MAML1; the association is dissociated by RBPJ. Associates with positive transcription elongation factor b (P-TEFb). Component of the SNARP complex which consists at least of SNIP1, SNW1, THRAP3, BCLAF1 and PNN. (Microbial infection) Interacts with human papillomavirus type-16 (HPV16) E7 protein. As to quaternary structure, (Microbial infection) Interacts with EBV EBNA2; EBNA2 competes with NCOR2 for interaction with SNW1.

It is found in the nucleus. Involved in pre-mRNA splicing as component of the spliceosome. As a component of the minor spliceosome, involved in the splicing of U12-type introns in pre-mRNAs. Required for the specific splicing of CDKN1A pre-mRNA; the function probably involves the recruitment of U2AF2 to the mRNA. May recruit PPIL1 to the spliceosome. May be involved in cyclin-D1/CCND1 mRNA stability through the SNARP complex which associates with both the 3'end of the CCND1 gene and its mRNA. Involved in transcriptional regulation. Modulates TGF-beta-mediated transcription via association with SMAD proteins, MYOD1-mediated transcription via association with PABPN1, RB1-mediated transcriptional repression, and retinoid-X receptor (RXR)- and vitamin D receptor (VDR)-dependent gene transcription in a cell line-specific manner probably involving coactivators NCOA1 and GRIP1. Is involved in NOTCH1-mediated transcriptional activation. Binds to multimerized forms of Notch intracellular domain (NICD) and is proposed to recruit transcriptional coactivators such as MAML1 to form an intermediate preactivation complex which associates with DNA-bound CBF-1/RBPJ to form a transcriptional activation complex by releasing SNW1 and redundant NOTCH1 NICD. Its function is as follows. (Microbial infection) Is recruited by HIV-1 Tat to Tat:P-TEFb:TAR RNA complexes and is involved in Tat transcription by recruitment of MYC, MEN1 and TRRAP to the HIV promoter. Functionally, (Microbial infection) Proposed to be involved in transcriptional activation by EBV EBNA2 of CBF-1/RBPJ-repressed promoters. This chain is SNW domain-containing protein 1 (SNW1), found in Homo sapiens (Human).